We begin with the raw amino-acid sequence, 225 residues long: E3 ubiquitin-protein ligase ATL59 (225 aa).

Residues 22–42 traverse the membrane as a helical segment; sequence FTFIVCVPICVILIVLLVLYI. The segment at 97-139 adopts an RING-type; atypical zinc-finger fold; the sequence is CSVCLGDYQAEEKLQQMPSCGHTFHMECIDLWLTSHTTCPLCR.

Belongs to the RING-type zinc finger family. ATL subfamily.

It localises to the membrane. The enzyme catalyses S-ubiquitinyl-[E2 ubiquitin-conjugating enzyme]-L-cysteine + [acceptor protein]-L-lysine = [E2 ubiquitin-conjugating enzyme]-L-cysteine + N(6)-ubiquitinyl-[acceptor protein]-L-lysine.. Its pathway is protein modification; protein ubiquitination. Functionally, E3 ubiquitin-protein ligase able to catalyze polyubiquitination with ubiquitin-conjugating enzyme E2 UBC8, UBC10, UBC11, and UBC34 in vitro. The protein is E3 ubiquitin-protein ligase ATL59 (ATL59) of Arabidopsis thaliana (Mouse-ear cress).